The chain runs to 323 residues: Sphingomyelinase D (323 aa).

Positions methionine 1 to glycine 20 are cleaved as a signal peptide. Histidine 59 is a catalytic residue. Mg(2+) contacts are provided by glutamate 79, aspartate 81, and aspartate 127. The SMD-tail motif lies at alanine 308–tryptophan 315.

It belongs to the sphingomyelinase D/phospholipase D family. It depends on Mg(2+) as a cofactor.

The protein localises to the secreted. It carries out the reaction a sphingomyelin + H2O = an N-acylsphing-4-enine 1-phosphate + choline + H(+). Its function is as follows. Catalyzes the hydrolysis of sphingomyelin. Sphingomyelinases D are produced by some spider in their venoms, but also by arthropods such as ticks, or pathogenic bacteria and fungi. They might play a role in pathogenicity through different mechanisms, such as membrane destabilization and host cell penetration, but also pulmonary inflammation and cutaneous lesions. This Trichophyton rubrum (strain ATCC MYA-4607 / CBS 118892) (Athlete's foot fungus) protein is Sphingomyelinase D.